The primary structure comprises 557 residues: MRTEDLNATWAGSLLDRLRGHGVHDVCIAPGSRSAPLALAAARRADRGDDLTLHTHFDERGLAFYALGLIRASRRPVAVITTSGTAAPNLHPAVAEARQSSLPLVVITADRPPELHHCGANQAMPQEDLFAPLVRAALALPPPEATLCGHWLNRRLDATLAEATGAGATGPIHLNVPLREPLYGGTEHPPVAPPLPPRRAPRAAAPPLGPAEPPQLFVAGGLNPEEAEAVLETAAAGNIPILADPSSQLRLRAHPCILGGAEHLLATAAGRAALGQARQVVQFGGRLTGRRLPAWLTEHAPQRWLITGDDHDLDPDWQATTVQADIATAARALRPAAPQPPLPGLTEALTRVAETRSAALANEPFAEPAATERLSRTLPPGMALFAGNSLPIRAVDLFAVAKHGNPCVTQRGVSGIDGLIATAAGFAHHHPDGVTLVIGDLSALHDLNSLALLDQARHTCVVVVLNNDGGGIFDLLPARSEGDDAHRRLFRMPHGYGFSQAAAQFRLPYWQCTDGDSLEAAHREACTRPGGSVIEVACPPGAGSEQMANLFRTLEAL.

Positions 183–206 are disordered; it reads YGGTEHPPVAPPLPPRRAPRAAAP.

Belongs to the TPP enzyme family. MenD subfamily. In terms of assembly, homodimer. Requires Mg(2+) as cofactor. It depends on Mn(2+) as a cofactor. Thiamine diphosphate serves as cofactor.

It carries out the reaction isochorismate + 2-oxoglutarate + H(+) = 5-enolpyruvoyl-6-hydroxy-2-succinyl-cyclohex-3-ene-1-carboxylate + CO2. The protein operates within quinol/quinone metabolism; 1,4-dihydroxy-2-naphthoate biosynthesis; 1,4-dihydroxy-2-naphthoate from chorismate: step 2/7. Its pathway is quinol/quinone metabolism; menaquinone biosynthesis. Functionally, catalyzes the thiamine diphosphate-dependent decarboxylation of 2-oxoglutarate and the subsequent addition of the resulting succinic semialdehyde-thiamine pyrophosphate anion to isochorismate to yield 2-succinyl-5-enolpyruvyl-6-hydroxy-3-cyclohexene-1-carboxylate (SEPHCHC). The sequence is that of 2-succinyl-5-enolpyruvyl-6-hydroxy-3-cyclohexene-1-carboxylate synthase from Halorhodospira halophila (strain DSM 244 / SL1) (Ectothiorhodospira halophila (strain DSM 244 / SL1)).